We begin with the raw amino-acid sequence, 94 residues long: Co-chaperonin GroES (94 aa).

The protein belongs to the GroES chaperonin family. As to quaternary structure, heptamer of 7 subunits arranged in a ring. Interacts with the chaperonin GroEL.

The protein localises to the cytoplasm. In terms of biological role, together with the chaperonin GroEL, plays an essential role in assisting protein folding. The GroEL-GroES system forms a nano-cage that allows encapsulation of the non-native substrate proteins and provides a physical environment optimized to promote and accelerate protein folding. GroES binds to the apical surface of the GroEL ring, thereby capping the opening of the GroEL channel. The polypeptide is Co-chaperonin GroES (Desulfitobacterium hafniense (strain DSM 10664 / DCB-2)).